Reading from the N-terminus, the 290-residue chain is Porphobilinogen deaminase (290 aa).

Residue Cys-237 is modified to S-(dipyrrolylmethanemethyl)cysteine.

Belongs to the HMBS family. Monomer. Requires dipyrromethane as cofactor.

It carries out the reaction 4 porphobilinogen + H2O = hydroxymethylbilane + 4 NH4(+). The protein operates within porphyrin-containing compound metabolism; protoporphyrin-IX biosynthesis; coproporphyrinogen-III from 5-aminolevulinate: step 2/4. Tetrapolymerization of the monopyrrole PBG into the hydroxymethylbilane pre-uroporphyrinogen in several discrete steps. In Clostridium botulinum (strain Loch Maree / Type A3), this protein is Porphobilinogen deaminase.